Here is a 165-residue protein sequence, read N- to C-terminus: Regulatory protein RecX (165 aa).

The protein belongs to the RecX family.

It is found in the cytoplasm. Its function is as follows. Modulates RecA activity. This chain is Regulatory protein RecX, found in Cronobacter sakazakii (strain ATCC BAA-894) (Enterobacter sakazakii).